Here is a 411-residue protein sequence, read N- to C-terminus: Dual-specificity RNA methyltransferase RlmN (411 aa).

Glu-125 (proton acceptor) is an active-site residue. The region spanning 131–380 (EEGRGTLCIS…IRTPRGRDIL (250 aa)) is the Radical SAM core domain. Residues Cys-138 and Cys-383 are joined by a disulfide bond. Residues Cys-145, Cys-149, and Cys-152 each coordinate [4Fe-4S] cluster. Residues 209 to 210 (GE), Ser-241, 263 to 265 (SLH), and Asn-340 each bind S-adenosyl-L-methionine. Cys-383 functions as the S-methylcysteine intermediate in the catalytic mechanism.

Belongs to the radical SAM superfamily. RlmN family. The cofactor is [4Fe-4S] cluster.

The protein localises to the cytoplasm. It catalyses the reaction adenosine(2503) in 23S rRNA + 2 reduced [2Fe-2S]-[ferredoxin] + 2 S-adenosyl-L-methionine = 2-methyladenosine(2503) in 23S rRNA + 5'-deoxyadenosine + L-methionine + 2 oxidized [2Fe-2S]-[ferredoxin] + S-adenosyl-L-homocysteine. The enzyme catalyses adenosine(37) in tRNA + 2 reduced [2Fe-2S]-[ferredoxin] + 2 S-adenosyl-L-methionine = 2-methyladenosine(37) in tRNA + 5'-deoxyadenosine + L-methionine + 2 oxidized [2Fe-2S]-[ferredoxin] + S-adenosyl-L-homocysteine. Specifically methylates position 2 of adenine 2503 in 23S rRNA and position 2 of adenine 37 in tRNAs. m2A2503 modification seems to play a crucial role in the proofreading step occurring at the peptidyl transferase center and thus would serve to optimize ribosomal fidelity. In Brucella canis (strain ATCC 23365 / NCTC 10854 / RM-666), this protein is Dual-specificity RNA methyltransferase RlmN.